A 465-amino-acid chain; its full sequence is Cysteine--tRNA ligase (465 aa).

Residue C29 coordinates Zn(2+). The short motif at P31–N41 is the 'HIGH' region element. 3 residues coordinate Zn(2+): C209, H234, and E238. Residues K266–S270 carry the 'KMSKS' region motif. K269 is a binding site for ATP. Position 270 is a phosphoserine (S270).

This sequence belongs to the class-I aminoacyl-tRNA synthetase family. In terms of assembly, monomer. The cofactor is Zn(2+).

The protein localises to the cytoplasm. It carries out the reaction tRNA(Cys) + L-cysteine + ATP = L-cysteinyl-tRNA(Cys) + AMP + diphosphate. The sequence is that of Cysteine--tRNA ligase from Bacillus cereus (strain B4264).